Consider the following 92-residue polypeptide: N(2)-fixation sustaining protein CowN (92 aa).

It belongs to the CowN family.

In terms of biological role, is required to sustain N(2)-dependent growth in the presence of low levels of carbon monoxide (CO). Probably acts by protecting the N(2) fixation ability of the nitrogenase complex, which is inactivated in the presence of CO. In Rhodopseudomonas palustris (strain BisA53), this protein is N(2)-fixation sustaining protein CowN.